The following is a 182-amino-acid chain: tRNA-splicing endonuclease (182 aa).

Residues tyrosine 119, histidine 127, and lysine 158 contribute to the active site.

It belongs to the tRNA-intron endonuclease family. Archaeal short subfamily. In terms of assembly, homotetramer; although the tetramer contains four active sites, only two participate in the cleavage. Therefore, it should be considered as a dimer of dimers.

It catalyses the reaction pretRNA = a 3'-half-tRNA molecule with a 5'-OH end + a 5'-half-tRNA molecule with a 2',3'-cyclic phosphate end + an intron with a 2',3'-cyclic phosphate and a 5'-hydroxyl terminus.. Functionally, endonuclease that removes tRNA introns. Cleaves pre-tRNA at the 5'- and 3'-splice sites to release the intron. The products are an intron and two tRNA half-molecules bearing 2',3' cyclic phosphate and 5'-OH termini. Recognizes a pseudosymmetric substrate in which 2 bulged loops of 3 bases are separated by a stem of 4 bp. This chain is tRNA-splicing endonuclease, found in Saccharolobus solfataricus (strain ATCC 35092 / DSM 1617 / JCM 11322 / P2) (Sulfolobus solfataricus).